The chain runs to 383 residues: Sulfate adenylyltransferase (383 aa).

Belongs to the sulfate adenylyltransferase family.

It carries out the reaction sulfate + ATP + H(+) = adenosine 5'-phosphosulfate + diphosphate. It participates in sulfur metabolism; hydrogen sulfide biosynthesis; sulfite from sulfate: step 1/3. This chain is Sulfate adenylyltransferase (sat), found in Aeropyrum pernix (strain ATCC 700893 / DSM 11879 / JCM 9820 / NBRC 100138 / K1).